Consider the following 241-residue polypeptide: tRNA (guanine-N(7)-)-methyltransferase (241 aa).

6 residues coordinate S-adenosyl-L-methionine: G61, E84, R86, N117, A118, and L137. The active site involves D140. The tract at residues 141–149 (PHFKKTKHK) is alphaC helix. T215 and E217 together coordinate S-adenosyl-L-methionine. Positions 215 to 223 (TEEGKKVQR) are alpha6 helix.

Belongs to the class I-like SAM-binding methyltransferase superfamily. TrmB family. As to quaternary structure, catalytic component of the METTL1-WDR4 complex, composed of mettl1 and wdr4.

Its subcellular location is the nucleus. It catalyses the reaction guanosine(46) in tRNA + S-adenosyl-L-methionine = N(7)-methylguanosine(46) in tRNA + S-adenosyl-L-homocysteine. The catalysed reaction is a guanosine in mRNA + S-adenosyl-L-methionine = an N(7)-methylguanosine in mRNA + S-adenosyl-L-homocysteine. It carries out the reaction a guanosine in miRNA + S-adenosyl-L-methionine = an N(7)-methylguanosine in miRNA + S-adenosyl-L-homocysteine. Its pathway is tRNA modification; N(7)-methylguanine-tRNA biosynthesis. In terms of biological role, catalytic component of METTL1-WDR4 methyltransferase complex that mediates the formation of N(7)-methylguanine in a subset of RNA species, such as tRNAs, mRNAs and microRNAs (miRNAs). Catalyzes the formation of N(7)-methylguanine at position 46 (m7G46) in a large subset of tRNAs that contain the 5'-RAGGU-3' motif within the variable loop. M7G46 interacts with C13-G22 in the D-loop to stabilize tRNA tertiary structure and protect tRNAs from decay. Also acts as a methyltransferase for a subset of internal N(7)-methylguanine in mRNAs. Internal N(7)-methylguanine methylation of mRNAs in response to stress promotes their relocalization to stress granules, thereby suppressing their translation. Also methylates a specific subset of miRNAs. The sequence is that of tRNA (guanine-N(7)-)-methyltransferase (mettl1) from Danio rerio (Zebrafish).